We begin with the raw amino-acid sequence, 116 residues long: Large ribosomal subunit protein bL20 (116 aa).

The protein belongs to the bacterial ribosomal protein bL20 family.

Functionally, binds directly to 23S ribosomal RNA and is necessary for the in vitro assembly process of the 50S ribosomal subunit. It is not involved in the protein synthesizing functions of that subunit. The chain is Large ribosomal subunit protein bL20 from Bacteroides thetaiotaomicron (strain ATCC 29148 / DSM 2079 / JCM 5827 / CCUG 10774 / NCTC 10582 / VPI-5482 / E50).